The chain runs to 558 residues: Formate--tetrahydrofolate ligase 2 (558 aa).

An ATP-binding site is contributed by threonine 67–threonine 74.

It belongs to the formate--tetrahydrofolate ligase family.

The catalysed reaction is (6S)-5,6,7,8-tetrahydrofolate + formate + ATP = (6R)-10-formyltetrahydrofolate + ADP + phosphate. It functions in the pathway one-carbon metabolism; tetrahydrofolate interconversion. The polypeptide is Formate--tetrahydrofolate ligase 2 (Desulfitobacterium hafniense (strain Y51)).